We begin with the raw amino-acid sequence, 122 residues long: Acidic phospholipase A2 2 (122 aa).

7 disulfides stabilise this stretch: Cys26–Cys115, Cys28–Cys44, Cys43–Cys95, Cys49–Cys122, Cys50–Cys88, Cys57–Cys81, and Cys75–Cys86. Tyr27, Gly29, and Gly31 together coordinate Ca(2+). Residue His47 is part of the active site. Asp48 contacts Ca(2+). Residue Asp89 is part of the active site.

The protein belongs to the phospholipase A2 family. Group II subfamily. D49 sub-subfamily. It depends on Ca(2+) as a cofactor. As to expression, expressed by the venom gland.

The protein resides in the secreted. It catalyses the reaction a 1,2-diacyl-sn-glycero-3-phosphocholine + H2O = a 1-acyl-sn-glycero-3-phosphocholine + a fatty acid + H(+). In terms of biological role, snake venom phospholipase A2 (PLA2) that has high lipolytic activity. PLA2 catalyzes the calcium-dependent hydrolysis of the 2-acyl groups in 3-sn-phosphoglycerides. In Craspedocephalus gramineus (Bamboo pit viper), this protein is Acidic phospholipase A2 2.